Consider the following 219-residue polypeptide: Ran-specific GTPase-activating protein 1 (219 aa).

3 stretches are compositionally biased toward basic and acidic residues: residues 1 to 12, 33 to 45, and 57 to 72; these read MAEVERKEEQAK, AVGDGKEGGEAKK, and PRKDEGKGGEERDNID. The interval 1–72 is disordered; it reads MAEVERKEEQ…KGGEERDNID (72 aa). The 141-residue stretch at 70–210 folds into the RanBD1 domain; that stretch reads NIDAAEVVEK…YDLGRAHNEK (141 aa).

This sequence belongs to the RANBP1 family.

The protein localises to the cytoplasm. The protein resides in the nucleus. In terms of biological role, important for the export of protein containing nuclear export signal (NES) out of the nucleus. The polypeptide is Ran-specific GTPase-activating protein 1 (YRB1) (Encephalitozoon cuniculi (strain GB-M1) (Microsporidian parasite)).